The sequence spans 401 residues: E3 ubiquitin-protein ligase NHLRC1 (401 aa).

The RING-type zinc-finger motif lies at 28–74; sequence CKVCFERFGHWQQRRPRNLPCGHVVCLACVAALAHPRTLGLECPFCR. NHL repeat units lie at residues 115–159, 163–206, 207–247, 250–303, 304–352, and 353–396; these read TLTC…FDSG, AHQF…FDFF, GQIK…LEAD, EGVL…FNST, MQLI…LGKP, and EEFP…FKVM.

In terms of assembly, interacts with AGL. Interacts (via the NHL repeats) with EPM2A/laforin. Forms a complex with EPM2A/laforin and HSP70. Interacts with PRDM8.

The protein resides in the endoplasmic reticulum. It is found in the nucleus. The enzyme catalyses S-ubiquitinyl-[E2 ubiquitin-conjugating enzyme]-L-cysteine + [acceptor protein]-L-lysine = [E2 ubiquitin-conjugating enzyme]-L-cysteine + N(6)-ubiquitinyl-[acceptor protein]-L-lysine.. The protein operates within protein modification; protein ubiquitination. In terms of biological role, E3 ubiquitin-protein ligase. Together with the phosphatase EPM2A/laforin, appears to be involved in the clearance of toxic polyglucosan and protein aggregates via multiple pathways. In complex with EPM2A/laforin and HSP70, suppresses the cellular toxicity of misfolded proteins by promoting their degradation through the ubiquitin-proteasome system (UPS). Ubiquitinates the glycogen-targeting protein phosphatase subunits PPP1R3C/PTG and PPP1R3D in a laforin-dependent manner and targets them for proteasome-dependent degradation, thus decreasing glycogen accumulation. Polyubiquitinates EPM2A/laforin and ubiquitinates AGL and targets them for proteasome-dependent degradation. Also promotes proteasome-independent protein degradation through the macroautophagy pathway. The chain is E3 ubiquitin-protein ligase NHLRC1 (Nhlrc1) from Mus musculus (Mouse).